A 105-amino-acid chain; its full sequence is Large ribosomal subunit protein uL22 (105 aa).

This sequence belongs to the universal ribosomal protein uL22 family. As to quaternary structure, part of the 50S ribosomal subunit.

Its function is as follows. This protein binds specifically to 23S rRNA; its binding is stimulated by other ribosomal proteins, e.g. L4, L17, and L20. It is important during the early stages of 50S assembly. It makes multiple contacts with different domains of the 23S rRNA in the assembled 50S subunit and ribosome. Functionally, the globular domain of the protein is located near the polypeptide exit tunnel on the outside of the subunit, while an extended beta-hairpin is found that lines the wall of the exit tunnel in the center of the 70S ribosome. This Sulfurimonas denitrificans (strain ATCC 33889 / DSM 1251) (Thiomicrospira denitrificans (strain ATCC 33889 / DSM 1251)) protein is Large ribosomal subunit protein uL22.